The primary structure comprises 597 residues: Elongation factor 4 (597 aa).

The region spanning 2–184 is the tr-type G domain; sequence KNIRNFSIIA…EIVAKIPAPT (183 aa). Residues 14–19 and 131–134 contribute to the GTP site; these read DHGKST and NKID.

It belongs to the TRAFAC class translation factor GTPase superfamily. Classic translation factor GTPase family. LepA subfamily.

It is found in the cell inner membrane. The enzyme catalyses GTP + H2O = GDP + phosphate + H(+). Required for accurate and efficient protein synthesis under certain stress conditions. May act as a fidelity factor of the translation reaction, by catalyzing a one-codon backward translocation of tRNAs on improperly translocated ribosomes. Back-translocation proceeds from a post-translocation (POST) complex to a pre-translocation (PRE) complex, thus giving elongation factor G a second chance to translocate the tRNAs correctly. Binds to ribosomes in a GTP-dependent manner. The sequence is that of Elongation factor 4 from Neisseria meningitidis serogroup C / serotype 2a (strain ATCC 700532 / DSM 15464 / FAM18).